We begin with the raw amino-acid sequence, 81 residues long: Translational regulator CsrA (81 aa).

This sequence belongs to the CsrA/RsmA family. As to quaternary structure, homodimer; the beta-strands of each monomer intercalate to form a hydrophobic core, while the alpha-helices form wings that extend away from the core.

The protein resides in the cytoplasm. Its function is as follows. A translational regulator that binds mRNA to regulate translation initiation and/or mRNA stability. Usually binds in the 5'-UTR at or near the Shine-Dalgarno sequence preventing ribosome-binding, thus repressing translation. Its main target seems to be the major flagellin gene, while its function is anatagonized by FliW. This Desulforapulum autotrophicum (strain ATCC 43914 / DSM 3382 / VKM B-1955 / HRM2) (Desulfobacterium autotrophicum) protein is Translational regulator CsrA.